The following is a 260-amino-acid chain: Cytochrome c oxidase subunit 3 (260 aa).

Over 1–15 (MAHQAHAYHMVDPSP) the chain is Mitochondrial matrix. The chain crosses the membrane as a helical span at residues 16–34 (WPLTGAVAALLLTSGLAMW). Topologically, residues 35-40 (FHFGSM) are mitochondrial intermembrane. The helical transmembrane segment at 41 to 66 (ILLTLGLITMVLTMIQWWRDVIREGT) threads the bilayer. At 67–72 (FQGHHT) the chain is on the mitochondrial matrix side. The chain crosses the membrane as a helical span at residues 73–105 (PPVQKGLRYGMILFITSEVFFFIGFFWAFYNSS). Over 106–128 (LAPTYELGECWPPTGITPLNPFE) the chain is Mitochondrial intermembrane. Residues 129–152 (VPLLNTAVLLASGVTVTWAHHSIM) form a helical membrane-spanning segment. Residues 153–155 (HGD) lie on the Mitochondrial matrix side of the membrane. Residues 156 to 183 (RKEAIQSLTLTILLGLYFTALQAMEYYE) form a helical membrane-spanning segment. Residues 184 to 190 (APFTIAD) lie on the Mitochondrial intermembrane side of the membrane. Residues 191–223 (GVYGSTFFVATGFHGLHVIIGSLFLSVCLLRQI) traverse the membrane as a helical segment. Residues 224–232 (QYHFTSKHH) are Mitochondrial matrix-facing. Residues 233 to 255 (FGFEAAWYWHFVDVVWLFLYVSI) form a helical membrane-spanning segment. The Mitochondrial intermembrane segment spans residues 256-260 (YWWGS).

It belongs to the cytochrome c oxidase subunit 3 family. In terms of assembly, component of the cytochrome c oxidase (complex IV, CIV), a multisubunit enzyme composed of 14 subunits. The complex is composed of a catalytic core of 3 subunits MT-CO1, MT-CO2 and MT-CO3, encoded in the mitochondrial DNA, and 11 supernumerary subunits COX4I, COX5A, COX5B, COX6A, COX6B, COX6C, COX7A, COX7B, COX7C, COX8 and NDUFA4, which are encoded in the nuclear genome. The complex exists as a monomer or a dimer and forms supercomplexes (SCs) in the inner mitochondrial membrane with NADH-ubiquinone oxidoreductase (complex I, CI) and ubiquinol-cytochrome c oxidoreductase (cytochrome b-c1 complex, complex III, CIII), resulting in different assemblies (supercomplex SCI(1)III(2)IV(1) and megacomplex MCI(2)III(2)IV(2)).

Its subcellular location is the mitochondrion inner membrane. The catalysed reaction is 4 Fe(II)-[cytochrome c] + O2 + 8 H(+)(in) = 4 Fe(III)-[cytochrome c] + 2 H2O + 4 H(+)(out). Component of the cytochrome c oxidase, the last enzyme in the mitochondrial electron transport chain which drives oxidative phosphorylation. The respiratory chain contains 3 multisubunit complexes succinate dehydrogenase (complex II, CII), ubiquinol-cytochrome c oxidoreductase (cytochrome b-c1 complex, complex III, CIII) and cytochrome c oxidase (complex IV, CIV), that cooperate to transfer electrons derived from NADH and succinate to molecular oxygen, creating an electrochemical gradient over the inner membrane that drives transmembrane transport and the ATP synthase. Cytochrome c oxidase is the component of the respiratory chain that catalyzes the reduction of oxygen to water. Electrons originating from reduced cytochrome c in the intermembrane space (IMS) are transferred via the dinuclear copper A center (CU(A)) of subunit 2 and heme A of subunit 1 to the active site in subunit 1, a binuclear center (BNC) formed by heme A3 and copper B (CU(B)). The BNC reduces molecular oxygen to 2 water molecules using 4 electrons from cytochrome c in the IMS and 4 protons from the mitochondrial matrix. The sequence is that of Cytochrome c oxidase subunit 3 (mt-co3) from Xenopus laevis (African clawed frog).